The chain runs to 130 residues: Large ribosomal subunit protein bL19 (130 aa).

This sequence belongs to the bacterial ribosomal protein bL19 family.

Its function is as follows. This protein is located at the 30S-50S ribosomal subunit interface and may play a role in the structure and function of the aminoacyl-tRNA binding site. The polypeptide is Large ribosomal subunit protein bL19 (Burkholderia ambifaria (strain ATCC BAA-244 / DSM 16087 / CCUG 44356 / LMG 19182 / AMMD) (Burkholderia cepacia (strain AMMD))).